The sequence spans 270 residues: ATP synthase subunit a (270 aa).

5 consecutive transmembrane segments (helical) span residues 37–57, 98–118, 143–163, 217–237, and 239–259; these read NVHI…LWVF, IAPL…MDLV, DVNI…YYSI, VVFI…GALP, and AIFH…LTIV.

The protein belongs to the ATPase A chain family. F-type ATPases have 2 components, CF(1) - the catalytic core - and CF(0) - the membrane proton channel. CF(1) has five subunits: alpha(3), beta(3), gamma(1), delta(1), epsilon(1). CF(0) has three main subunits: a(1), b(2) and c(9-12). The alpha and beta chains form an alternating ring which encloses part of the gamma chain. CF(1) is attached to CF(0) by a central stalk formed by the gamma and epsilon chains, while a peripheral stalk is formed by the delta and b chains.

The protein localises to the cell inner membrane. Its function is as follows. Key component of the proton channel; it plays a direct role in the translocation of protons across the membrane. This chain is ATP synthase subunit a, found in Aliivibrio fischeri (strain ATCC 700601 / ES114) (Vibrio fischeri).